The following is a 392-amino-acid chain: N-acetylneuraminate epimerase (392 aa).

An N-terminal signal peptide occupies residues 1-35 (MTQLYPQYKKQLTTKIVLFSALSLLMMASLPNTYA). 7 Kelch repeats span residues 56–100 (SLYV…VVLA), 102–155 (KLYV…TTLD), 157–192 (SQAV…AVIN), 193–238 (AYFN…SRMD), 241–290 (LILI…LAGA), 312–361 (KQFN…QGPD), and 363–392 (VILI…LHIE). Catalysis depends on Glu-247, which acts as the Proton acceptor.

The protein belongs to the NanM family. As to quaternary structure, homodimer.

It is found in the periplasm. It catalyses the reaction N-acetyl-alpha-neuraminate = N-acetyl-beta-neuraminate. Its function is as follows. Converts alpha-N-acetylneuranimic acid (Neu5Ac) to the beta-anomer, accelerating the equilibrium between the alpha- and beta-anomers. Probably facilitates sialidase-negative bacteria to compete successfully for limited amounts of extracellular Neu5Ac, which is likely taken up in the beta-anomer. In addition, the rapid removal of sialic acid from solution might be advantageous to the bacterium to damp down host responses. The polypeptide is N-acetylneuraminate epimerase (Yersinia pseudotuberculosis serotype O:1b (strain IP 31758)).